Here is a 165-residue protein sequence, read N- to C-terminus: SsrA-binding protein (165 aa).

The segment covering 135-158 (QAHDKRQDMARRDAQREVTRELGR) has biased composition (basic and acidic residues). Residues 135-165 (QAHDKRQDMARRDAQREVTRELGRRVKGMTS) form a disordered region.

This sequence belongs to the SmpB family.

The protein localises to the cytoplasm. Its function is as follows. Required for rescue of stalled ribosomes mediated by trans-translation. Binds to transfer-messenger RNA (tmRNA), required for stable association of tmRNA with ribosomes. tmRNA and SmpB together mimic tRNA shape, replacing the anticodon stem-loop with SmpB. tmRNA is encoded by the ssrA gene; the 2 termini fold to resemble tRNA(Ala) and it encodes a 'tag peptide', a short internal open reading frame. During trans-translation Ala-aminoacylated tmRNA acts like a tRNA, entering the A-site of stalled ribosomes, displacing the stalled mRNA. The ribosome then switches to translate the ORF on the tmRNA; the nascent peptide is terminated with the 'tag peptide' encoded by the tmRNA and targeted for degradation. The ribosome is freed to recommence translation, which seems to be the essential function of trans-translation. This is SsrA-binding protein from Mycolicibacterium vanbaalenii (strain DSM 7251 / JCM 13017 / BCRC 16820 / KCTC 9966 / NRRL B-24157 / PYR-1) (Mycobacterium vanbaalenii).